The primary structure comprises 263 residues: HTH-type transcriptional repressor NanR (263 aa).

An HTH gntR-type domain is found at 30–98; it reads KKLSEMVEEE…NGERARVSRP (69 aa). The segment at residues 58–77 is a DNA-binding region (H-T-H motif); it reads ERELMAFFNVGRPSVREALA.

Belongs to the NanR family.

Transcriptional repressor that controls expression of the genes required for the catabolism of sialic acids. The sequence is that of HTH-type transcriptional repressor NanR from Salmonella arizonae (strain ATCC BAA-731 / CDC346-86 / RSK2980).